The chain runs to 313 residues: Porphobilinogen deaminase (313 aa).

An S-(dipyrrolylmethanemethyl)cysteine modification is found at cysteine 242.

The protein belongs to the HMBS family. In terms of assembly, monomer. Dipyrromethane is required as a cofactor.

It carries out the reaction 4 porphobilinogen + H2O = hydroxymethylbilane + 4 NH4(+). Its pathway is porphyrin-containing compound metabolism; protoporphyrin-IX biosynthesis; coproporphyrinogen-III from 5-aminolevulinate: step 2/4. Its function is as follows. Tetrapolymerization of the monopyrrole PBG into the hydroxymethylbilane pre-uroporphyrinogen in several discrete steps. The polypeptide is Porphobilinogen deaminase (Escherichia fergusonii (strain ATCC 35469 / DSM 13698 / CCUG 18766 / IAM 14443 / JCM 21226 / LMG 7866 / NBRC 102419 / NCTC 12128 / CDC 0568-73)).